The sequence spans 318 residues: Mevalonate 3-kinase (318 aa).

Residue leucine 19 participates in substrate binding. ATP-binding positions include 96 to 100 (YSSQN) and 105 to 108 (SGSS). Glutamate 140 and arginine 144 together coordinate substrate. ATP contacts are provided by arginine 185 and serine 188.

It belongs to the GHMP kinase family. As to quaternary structure, homodimer.

It carries out the reaction (R)-mevalonate + ATP = (R)-3-phosphomevalonate + ADP + H(+). It functions in the pathway isoprenoid biosynthesis; isopentenyl diphosphate biosynthesis via mevalonate pathway. In terms of biological role, catalyzes the phosphorylation of mevalonate (MVA) to yield mevalonate-3-phosphate. Functions in an alternative mevalonate pathway, only present in extreme acidophiles of the Thermoplasmatales order, which passes through mevalonate 3-phosphate rather than mevalonate 5-phosphate. The protein is Mevalonate 3-kinase of Thermoplasma acidophilum (strain ATCC 25905 / DSM 1728 / JCM 9062 / NBRC 15155 / AMRC-C165).